The following is a 155-amino-acid chain: V-type proton ATPase 16 kDa proteolipid subunit c (155 aa).

Residues 1 to 10 (MSEAKNGPEY) lie on the Lumenal side of the membrane. Residues 11-33 (ASFFAVMGASAAMVFSALGAAYG) form a helical membrane-spanning segment. Residues 34-55 (TAKSGTGIAAMSVMRPEMIMKS) are Cytoplasmic-facing. Residues 56-76 (IIPVVMAGIIAIYGLVVAVLI) traverse the membrane as a helical segment. Residues 77–92 (ANSLNDGISLYRSFLQ) are Lumenal-facing. The chain crosses the membrane as a helical span at residues 93–114 (LGAGLSVGLSGLAAGFAIGIVG). Residues 115 to 131 (DAGVRGTAQQPRLFVGM) lie on the Cytoplasmic side of the membrane. Residues 132-152 (ILILIFAEVLGLYGLIVALIL) traverse the membrane as a helical segment. At 153-155 (STK) the chain is on the lumenal side.

This sequence belongs to the V-ATPase proteolipid subunit family. As to quaternary structure, V-ATPase is a heteromultimeric enzyme made up of two complexes: the ATP-hydrolytic V1 complex and the proton translocation V0 complex. The V1 complex consists of three catalytic AB heterodimers that form a heterohexamer, three peripheral stalks each consisting of EG heterodimers, one central rotor including subunits D and F, and the regulatory subunits C and H. The proton translocation complex V0 consists of the proton transport subunit a, a ring of proteolipid subunits c9c'', rotary subunit d, subunits e and f, and the accessory subunits ATP6AP1/Ac45 and ATP6AP2/PRR. Interacts with the V0 complex V-ATPase subunit a4 ATP6V0A4. Interacts with LASS2. Interacts with RNF182; this interaction leads to ubiquitination and degradation via the proteasome pathway. Ubiquitinated by RNF182, leading to its degradation via the ubiquitin-proteasome pathway. Expressed in brain (at protein level).

The protein resides in the cytoplasmic vesicle. It is found in the clathrin-coated vesicle membrane. The protein localises to the secretory vesicle. Its subcellular location is the synaptic vesicle membrane. Its function is as follows. Proton-conducting pore forming subunit of the V0 complex of vacuolar(H+)-ATPase (V-ATPase), a multisubunit enzyme composed of a peripheral complex (V1) that hydrolyzes ATP and a membrane integral complex (V0) that translocates protons. V-ATPase is responsible for acidifying and maintaining the pH of intracellular compartments and in some cell types, is targeted to the plasma membrane, where it is responsible for acidifying the extracellular environment. The protein is V-type proton ATPase 16 kDa proteolipid subunit c (ATP6V0C) of Bos taurus (Bovine).